The chain runs to 4836 residues: E3 ubiquitin-protein ligase HERC2 (4836 aa).

The interval 58–90 is disordered; the sequence is LPLRKDDGVDAQSGTKKEDLNDKEKKEEEETPA. Over residues 72–85 the composition is skewed to basic and acidic residues; it reads TKKEDLNDKEKKEE. Position 273 is a phosphothreonine (Thr273). An RCC1 1-1 repeat occupies 416–462; that stretch reads PTSHKGSLQEVIGWGLIGWKYYANVIGPIQCEGLASLGVMQVACAEK. The RCC1 1-2 repeat unit spans residues 463–513; sequence RFLILSRNGRVYTQAYNSDMLAPQLVQGLASRNIVKIAAHSDGHHYLALAA. One copy of the RCC1 1-3 repeat lies at 514 to 569; sequence TGEVYSWGCGDGGRLGHGDTVPLEEPKVISAFSGKQAGKHVVHIACGSTYSAAITA. One copy of the RCC1 1-4 repeat lies at 570–621; sequence EGELYTWGRGNYGRLGHGSSEDEAIPMLVAGLKGLKVIDVACGSGDAQTLAV. Residues 624–675 form an RCC1 1-5 repeat; that stretch reads NGQVWSWGDGDYGKLGRGGSDGCKTPKLIEKLQDLDVIKVRCGSQFSIALTK. Residue Thr648 is modified to Phosphothreonine. The stretch at 676 to 727 is one RCC1 1-6 repeat; sequence DGQVYSWGKGDNQRLGHGTEEHVRYPKLLEGLQGKKVIDVAAGSTHCLALTE. The RCC1 1-7 repeat unit spans residues 729 to 779; it reads SEVHSWGSNDQCQHFDTLRVTKPEPTALPGLDSKHIVGIACGPAQSFAWSS. A coiled-coil region spans residues 948–981; sequence ALNAAITAEIQDIEAKKEAQKEKEIDEQEASAST. Residues 1208–1284 form the Cytochrome b5 heme-binding domain; it reads VTLIRKADLE…MHAFCVGQYL (77 aa). Ser1578 bears the Phosphoserine mark. The MIB/HERC2 domain maps to 1860–1933; sequence SGPELAAMMK…KYDLKLVELP (74 aa). Residue Ser1943 is modified to Phosphoserine. Thr1945 bears the Phosphothreonine mark. A disordered region spans residues 2351-2376; it reads GTGTLQTDDGAAASPDLGDMSPEGPQ. Position 2455 is a phosphoserine (Ser2455). One can recognise a CPH domain in the interval 2555-2631; that stretch reads RADFLSNDDY…RYIHVELIGY (77 aa). Residues 2704–2756 form a ZZ-type zinc finger; it reads HPGVTCDGCQTFPINGSRFKCRNCDDFDFCETCFKTKKHNTRHTFGRINEPGQ. Residues Cys2709, Cys2712, Cys2724, Cys2727, Cys2733, Cys2736, His2742, and His2746 each coordinate Zn(2+). A DOC domain is found at 2760–2937; that stretch reads FCGRSGKQLK…ASDNEEEEDD (178 aa). The segment at 2928-2947 is disordered; the sequence is ASDNEEEEDDKGSTGSLIRK. Ser2929 carries the post-translational modification Phosphoserine. One copy of the RCC1 2-1 repeat lies at 2959–3010; it reads RTKVFVWGLNDKDQLGGLKGSKIKVPSFSETLSALNVVQVAGGSKSLFAVTV. An RCC1 2-2 repeat occupies 3011 to 3065; that stretch reads EGKVYSCGEATNGRLGLGMSSGTVPIPRQITALSSYVVKKVAVHSGGRHATALTV. An RCC1 2-3 repeat occupies 3066 to 3117; it reads DGKVFSWGEGDDGKLGHFSRMNCDKPRLIEALKTKRIRDIACGSSHSAALTS. Residues 3119–3169 form an RCC1 2-4 repeat; sequence GELYTWGLGEYGRLGHGDNTTQLKPKMVKVLLGHRVIQVACGSRDAQTLAL. The RCC1 2-5 repeat unit spans residues 3172–3223; that stretch reads EGLVFSWGDGDFGKLGRGGSEGCNIPQNIERLNGQGVCQIECGAQFSLALTK. The stretch at 3225 to 3275 is one RCC1 2-6 repeat; that stretch reads GVVWTWGKGDYFRLGHGSDVHVRKPQVVEGLRGKKIVHVAVGALHCLAVTD. An RCC1 2-7 repeat occupies 3276–3327; the sequence is SGQVYAWGDNDHGQQGNGTTTVNRKPTLVQGLEGQKITRVACGSSHSVAWTT. Disordered regions lie at residues 3479-3499, 3517-3537, and 3604-3632; these read DAVTPSAVTPSAPSASSRPFI, KTKEDVESQNKTSGPEPQSLD, and SQSGRLSSQPVVVESSHPYTDDTSTSGTV. Over residues 3480 to 3495 the composition is skewed to low complexity; it reads AVTPSAVTPSAPSASS. Composition is skewed to polar residues over residues 3604-3613 and 3620-3631; these read SQSGRLSSQP and HPYTDDTSTSGT. An RCC1 3-1 repeat occupies 3953 to 4004; sequence SGTIYGWGHNHRGQLGGIEGAKVKVPTPCEALATLRPVQLIGGEQTLFAVTA. The RCC1 3-2 repeat unit spans residues 4006–4058; sequence GKLYATGYGAGGRLGIGGTESVSTPTLLESIQHVFIKKVAVNSGGKHCLALSS. The stretch at 4060-4110 is one RCC1 3-3 repeat; it reads GEVYSWGEAEDGKLGHGNRSPCDRPRVIESLRGIEVVDVAAGGAHSACVTA. Residues 4112–4164 form an RCC1 3-4 repeat; that stretch reads GDLYTWGKGRYGRLGHSDSEDQLKPKLVEALQGHRVIDIACGSGDAQTLCLTD. An RCC1 3-5 repeat occupies 4166–4216; sequence DTVWSWGDGDYGKLGRGGSDGCKVPMKIDSLTGLGVVKVECGSQFSVALTK. The stretch at 4218 to 4268 is one RCC1 3-6 repeat; it reads GAVYTWGKGDYHRLGHGSDDHVRRPRQVQGLQGKKVIAIATGSLHCVCCTE. Residues 4270-4320 form an RCC1 3-7 repeat; sequence GEVYTWGDNDEGQLGDGTTNAIQRPRLVAALQGKKVNRVACGSAHTLAWST. The region spanning 4459–4796 is the HECT domain; that stretch reads DSLLLPHRVW…IHFCKSIDTD (338 aa). The Glycyl thioester intermediate role is filled by Cys4764. The segment at 4806–4836 is disordered; that stretch reads EPAADDSSEDSDNEDADSFASDSTQDYLTGH. The segment covering 4808–4822 has biased composition (acidic residues); the sequence is AADDSSEDSDNEDAD. A phosphoserine mark is found at Ser4812, Ser4813, and Ser4816. A Phosphothreonine modification is found at Thr4829.

Interacts (when phosphorylated at Thr-4829 and sumoylated) with RNF8 (via FHA domain); this interaction increases after ionising radiation (IR) treatment. Interacts with XPA. Interacts with NEURL4. Via its interaction with NEURL4, may indirectly interact with CCP110 and CEP97. Phosphorylation at Thr-4829 is required for interaction with RNF8. In terms of processing, sumoylated with SUMO1 by PIAS4 in response to double-strand breaks (DSBs), promoting the interaction with RNF8. In terms of tissue distribution, highest levels are found in brain and testis with lower levels in heart, lung, liver, skeletal muscle and kidney. Little expression detected in spleen.

The protein resides in the cytoplasm. It is found in the cytoskeleton. Its subcellular location is the microtubule organizing center. It localises to the centrosome. The protein localises to the centriole. The protein resides in the nucleus. The enzyme catalyses S-ubiquitinyl-[E2 ubiquitin-conjugating enzyme]-L-cysteine + [acceptor protein]-L-lysine = [E2 ubiquitin-conjugating enzyme]-L-cysteine + N(6)-ubiquitinyl-[acceptor protein]-L-lysine.. Its pathway is protein modification; protein ubiquitination. Its function is as follows. E3 ubiquitin-protein ligase that regulates ubiquitin-dependent retention of repair proteins on damaged chromosomes. Recruited to sites of DNA damage in response to ionizing radiation (IR) and facilitates the assembly of UBE2N and RNF8 promoting DNA damage-induced formation of 'Lys-63'-linked ubiquitin chains. Acts as a mediator of binding specificity between UBE2N and RNF8. Involved in the maintenance of RNF168 levels. E3 ubiquitin-protein ligase that promotes the ubiquitination and proteasomal degradation of XPA which influences the circadian oscillation of DNA excision repair activity. By controlling the steady-state expression of the IGF1R receptor, indirectly regulates the insulin-like growth factor receptor signaling pathway. Also modulates iron metabolism by regulating the basal turnover of FBXL5. The protein is E3 ubiquitin-protein ligase HERC2 of Mus musculus (Mouse).